The chain runs to 164 residues: Phosphopantetheine adenylyltransferase (164 aa).

S9 contributes to the substrate binding site. ATP is bound by residues 9–10 and H17; that span reads SF. Substrate contacts are provided by K41, L73, and K87. Residues 88–90, E98, and 122–128 contribute to the ATP site; these read GLR and YSYLSSS.

The protein belongs to the bacterial CoaD family. As to quaternary structure, homohexamer. The cofactor is Mg(2+).

The protein resides in the cytoplasm. The catalysed reaction is (R)-4'-phosphopantetheine + ATP + H(+) = 3'-dephospho-CoA + diphosphate. The protein operates within cofactor biosynthesis; coenzyme A biosynthesis; CoA from (R)-pantothenate: step 4/5. Its function is as follows. Reversibly transfers an adenylyl group from ATP to 4'-phosphopantetheine, yielding dephospho-CoA (dPCoA) and pyrophosphate. This Rhodococcus erythropolis (strain PR4 / NBRC 100887) protein is Phosphopantetheine adenylyltransferase.